Consider the following 424-residue polypeptide: Virion nicking-joining enzyme (424 aa).

PLD phosphodiesterase domains follow at residues 110–137 (LGGV…DWRS) and 320–346 (YSRV…TGNY).

It belongs to the orthopoxvirus OPG042 family.

Its subcellular location is the virion. In terms of biological role, DNA nicking enzyme that cleaves extruded cruciform DNA at its tip. Probably nicks viral hairpins. This Vaccinia virus (strain Western Reserve) (VACV) protein is Virion nicking-joining enzyme (OPG042).